The sequence spans 127 residues: Large ribosomal subunit protein bL12 (127 aa).

It belongs to the bacterial ribosomal protein bL12 family. Homodimer. Part of the ribosomal stalk of the 50S ribosomal subunit. Forms a multimeric L10(L12)X complex, where L10 forms an elongated spine to which 2 to 4 L12 dimers bind in a sequential fashion. Binds GTP-bound translation factors.

In terms of biological role, forms part of the ribosomal stalk which helps the ribosome interact with GTP-bound translation factors. Is thus essential for accurate translation. The sequence is that of Large ribosomal subunit protein bL12 from Pelobacter propionicus (strain DSM 2379 / NBRC 103807 / OttBd1).